The primary structure comprises 468 residues: Tumor necrosis factor receptor superfamily member 10A (468 aa).

An N-terminal signal peptide occupies residues 1–23; it reads MAPPPARVHLGAFLAVTPNPGSA. The disordered stretch occupies residues 17 to 82; it reads TPNPGSAASG…APGPRPAREA (66 aa). The span at 20–34 shows a compositional bias: low complexity; sequence PGSAASGTEAAAATP. Over 24–239 the chain is Extracellular; the sequence is ASGTEAAAAT…VHKESGNGHN (216 aa). Position 52 is an omega-N-methylarginine (R52). Residues 63-74 show a composition bias toward low complexity; the sequence is GPSARARAGRAP. TNFR-Cys repeat units lie at residues 107-145, 147-188, and 189-229; these read SAAT…PGAC, RCTE…NTAC, and QCKP…DIEC. Intrachain disulfides connect C132–C145, C148–C164, C167–C180, C170–C188, C190–C204, C207–C221, and C211–C229. N156 carries N-linked (GlcNAc...) asparagine glycosylation. Residues 240-262 form a helical membrane-spanning segment; the sequence is IWVILVVTLVVPLLLVAVLIVCC. Residues 263-468 lie on the Cytoplasmic side of the membrane; the sequence is CIGSGCGGDP…DGTGSAVSLE (206 aa). A Death domain is found at 365–448; that stretch reads MLFFDKFANI…HAREKIQDLL (84 aa). Phosphoserine is present on residues S424, S463, and S466.

As to quaternary structure, monomer. Homooligomers and heterooligomers with TNFRSF10B. Three TNFRSF10A molecules interact with the TNFSF10 homotrimer. Can interact with TRADD and RIPK1. Interacts with ARAP1. In the absence of stimulation, interacts with BIRC2, DDX3X and GSK3B. The interaction with BIRC2 and DDX3X is further enhanced upon receptor stimulation and accompanied by DDX3X and BIRC2 cleavage. Interacts with ZDHHC3. Interacts with PTPN6; this interaction enables the inhibition of T-cell receptor signaling via LCK. (Microbial infection) Interacts with HCMV protein UL141; this interaction prevents TNFRSF10A cell surface expression. Palmitoylated. Palmitoylation of TNFRSF10A is required for its association with lipid rafts, oligomerization and function in TRAIL-induced cell death. Palmitoylated by ZDHHC3. As to expression, widely expressed. High levels are found in spleen, peripheral blood leukocytes, small intestine and thymus, but also in K-562 erythroleukemia cells, MCF-7 breast carcinoma cells and activated T-cells.

It is found in the cell membrane. The protein localises to the membrane raft. Its subcellular location is the cytoplasm. The protein resides in the cytosol. Its function is as follows. Receptor for the cytotoxic ligand TNFSF10/TRAIL. The adapter molecule FADD recruits caspase-8 to the activated receptor. The resulting death-inducing signaling complex (DISC) performs caspase-8 proteolytic activation which initiates the subsequent cascade of caspases (aspartate-specific cysteine proteases) mediating apoptosis. Promotes the activation of NF-kappa-B. In Homo sapiens (Human), this protein is Tumor necrosis factor receptor superfamily member 10A (TNFRSF10A).